Consider the following 223-residue polypeptide: Probable glutathione S-transferase (223 aa).

The 80-residue stretch at 2–81 (AEVKLLGFWY…YIDETFEGPS (80 aa)) folds into the GST N-terminal domain. Residues Ser12, Lys39, Val53, and 65-66 (ES) each bind glutathione. The region spanning 86–212 (DPYDRALARF…ELLAFFRARF (127 aa)) is the GST C-terminal domain.

It belongs to the GST superfamily. HSP26 family. Root tip-specific expression.

The catalysed reaction is RX + glutathione = an S-substituted glutathione + a halide anion + H(+). This is Probable glutathione S-transferase from Nicotiana tabacum (Common tobacco).